The sequence spans 80 residues: Defensin-like protein 44 (80 aa).

The N-terminal stretch at 1–27 (MAITKTSVTLLLLIIMAASLSNFSVLA) is a signal peptide. 4 disulfide bridges follow: C40-C79, C44-C67, C53-C77, and C57-C78.

Belongs to the DEFL family.

The protein localises to the secreted. The polypeptide is Defensin-like protein 44 (Arabidopsis thaliana (Mouse-ear cress)).